The primary structure comprises 282 residues: tRNA uridine(34) hydroxylase (282 aa).

The 95-residue stretch at 128-222 (EGRPVVMLDT…YFEEVGGSHY (95 aa)) folds into the Rhodanese domain. Cys-182 functions as the Cysteine persulfide intermediate in the catalytic mechanism.

Belongs to the TrhO family.

It carries out the reaction uridine(34) in tRNA + AH2 + O2 = 5-hydroxyuridine(34) in tRNA + A + H2O. In terms of biological role, catalyzes oxygen-dependent 5-hydroxyuridine (ho5U) modification at position 34 in tRNAs. The protein is tRNA uridine(34) hydroxylase of Cupriavidus taiwanensis (strain DSM 17343 / BCRC 17206 / CCUG 44338 / CIP 107171 / LMG 19424 / R1) (Ralstonia taiwanensis (strain LMG 19424)).